We begin with the raw amino-acid sequence, 242 residues long: Small ribosomal subunit protein uS2 (242 aa).

Belongs to the universal ribosomal protein uS2 family.

The polypeptide is Small ribosomal subunit protein uS2 (Neisseria meningitidis serogroup B (strain ATCC BAA-335 / MC58)).